Reading from the N-terminus, the 428-residue chain is Dihydroorotase (428 aa).

Zn(2+)-binding residues include His59 and His61. Residues 61–63 (HLR) and Asn93 contribute to the substrate site. Zn(2+) contacts are provided by Asp151, His178, and His231. Asn277 contacts substrate. Residue Asp304 participates in Zn(2+) binding. Asp304 is an active-site residue. Substrate-binding positions include His308 and 322-323 (FG).

Belongs to the metallo-dependent hydrolases superfamily. DHOase family. Class I DHOase subfamily. It depends on Zn(2+) as a cofactor.

It catalyses the reaction (S)-dihydroorotate + H2O = N-carbamoyl-L-aspartate + H(+). It functions in the pathway pyrimidine metabolism; UMP biosynthesis via de novo pathway; (S)-dihydroorotate from bicarbonate: step 3/3. Catalyzes the reversible cyclization of carbamoyl aspartate to dihydroorotate. The sequence is that of Dihydroorotase from Bacillus cereus (strain B4264).